Here is a 258-residue protein sequence, read N- to C-terminus: MYTTGLIGKNINYSESPEIHNNYYKKNNIPFFYKIFNLKQDQIDDFIKNLHKNNIKGFNVTIPYKETILQYLNDIVYPADKIGAVNTVAVQEDKLIGYNTDYIGFIKSLQYYNIQVKNFKCLIIGSGGSAKCIYYALKELNARDICIVSRNPEKARLKFEKKVKILNIKDENKLDRYDLIVNCTPIGGPNLKEQKPIELKEIKKNCVVYDLNYTPKRSKLLKEAKENGAFIINGEKMLIFQAYSAIGLWCLNGIKGGR.

Residues 14 to 16 and threonine 61 contribute to the shikimate site; that span reads SES. Lysine 65 functions as the Proton acceptor in the catalytic mechanism. 2 residues coordinate shikimate: asparagine 86 and aspartate 101. NADP(+)-binding positions include 125–129 and leucine 211; that span reads GSGGS. Position 213 (tyrosine 213) interacts with shikimate. Glycine 234 lines the NADP(+) pocket.

It belongs to the shikimate dehydrogenase family. In terms of assembly, homodimer.

The catalysed reaction is shikimate + NADP(+) = 3-dehydroshikimate + NADPH + H(+). The protein operates within metabolic intermediate biosynthesis; chorismate biosynthesis; chorismate from D-erythrose 4-phosphate and phosphoenolpyruvate: step 4/7. Functionally, involved in the biosynthesis of the chorismate, which leads to the biosynthesis of aromatic amino acids. Catalyzes the reversible NADPH linked reduction of 3-dehydroshikimate (DHSA) to yield shikimate (SA). This Clostridium botulinum (strain ATCC 19397 / Type A) protein is Shikimate dehydrogenase (NADP(+)).